A 228-amino-acid chain; its full sequence is NAD(P)H-quinone oxidoreductase subunit K, chloroplastic (228 aa).

[4Fe-4S] cluster is bound by residues Cys43, Cys44, Cys108, and Cys139.

The protein belongs to the complex I 20 kDa subunit family. As to quaternary structure, NDH is composed of at least 16 different subunits, 5 of which are encoded in the nucleus. [4Fe-4S] cluster is required as a cofactor.

It localises to the plastid. The protein localises to the chloroplast thylakoid membrane. The catalysed reaction is a plastoquinone + NADH + (n+1) H(+)(in) = a plastoquinol + NAD(+) + n H(+)(out). The enzyme catalyses a plastoquinone + NADPH + (n+1) H(+)(in) = a plastoquinol + NADP(+) + n H(+)(out). Functionally, NDH shuttles electrons from NAD(P)H:plastoquinone, via FMN and iron-sulfur (Fe-S) centers, to quinones in the photosynthetic chain and possibly in a chloroplast respiratory chain. The immediate electron acceptor for the enzyme in this species is believed to be plastoquinone. Couples the redox reaction to proton translocation, and thus conserves the redox energy in a proton gradient. The protein is NAD(P)H-quinone oxidoreductase subunit K, chloroplastic of Ceratophyllum demersum (Rigid hornwort).